The primary structure comprises 102 residues: UPF0473 protein SAS1551 (102 aa).

This sequence belongs to the UPF0473 family.

In Staphylococcus aureus (strain MSSA476), this protein is UPF0473 protein SAS1551.